Here is a 109-residue protein sequence, read N- to C-terminus: Phosphoribosyl-ATP pyrophosphatase (109 aa).

This sequence belongs to the PRA-PH family.

The protein localises to the cytoplasm. It catalyses the reaction 1-(5-phospho-beta-D-ribosyl)-ATP + H2O = 1-(5-phospho-beta-D-ribosyl)-5'-AMP + diphosphate + H(+). It participates in amino-acid biosynthesis; L-histidine biosynthesis; L-histidine from 5-phospho-alpha-D-ribose 1-diphosphate: step 2/9. This is Phosphoribosyl-ATP pyrophosphatase from Marinobacter nauticus (strain ATCC 700491 / DSM 11845 / VT8) (Marinobacter aquaeolei).